A 122-amino-acid polypeptide reads, in one-letter code: uncharacterized protein (122 aa).

Residues 9–25 (AFPSPVFLGGVFFVFFF) form a helical membrane-spanning segment.

It is found in the cytoplasm. It localises to the nucleus. The protein localises to the membrane. This is an uncharacterized protein from Saccharomyces cerevisiae (strain ATCC 204508 / S288c) (Baker's yeast).